A 1025-amino-acid polypeptide reads, in one-letter code: DNA ligase 4 (1025 aa).

The tract at residues 1–36 (MMQPTPAPSSAPGSPQRTQAEPEMETPSYPQPPQNV) is disordered. ATP is bound by residues Glu289, Lys291, Leu292, Arg296, Glu349, Phe387, Glu447, Lys452, Lys469, and Lys471. Residue Lys291 is the N6-AMP-lysine intermediate of the active site. A Mg(2+)-binding site is contributed by Glu349. Glu447 provides a ligand contact to Mg(2+). Residues 667-763 (VKTDIFNGMK…EPAPFKKKYF (97 aa)) enclose the BRCT 1 domain. The interval 773-904 (ADEYNEDDGE…TTPDVDGDVK (132 aa)) is disordered. Composition is skewed to acidic residues over residues 775–785 (EYNEDDGEEEG) and 806–816 (SETEDEDEEQA). Residues 817–838 (PEIKEEQDGELHEWLKVDDRKS) are compositionally biased toward basic and acidic residues. Residues 845 to 870 (DEEDSVTEDDSDNADVADEEEPDLDD) are compositionally biased toward acidic residues. Residues 891-904 (RHRETTPDVDGDVK) are compositionally biased toward basic and acidic residues. The region spanning 915–1025 (DPDVIFKHLC…TLLDEEGESF (111 aa)) is the BRCT 2 domain.

The protein belongs to the ATP-dependent DNA ligase family. Mg(2+) is required as a cofactor.

The protein localises to the nucleus. It catalyses the reaction ATP + (deoxyribonucleotide)n-3'-hydroxyl + 5'-phospho-(deoxyribonucleotide)m = (deoxyribonucleotide)n+m + AMP + diphosphate.. Its function is as follows. DNA ligase involved in DNA non-homologous end joining (NHEJ); required for double-strand break (DSB) repair. This chain is DNA ligase 4 (LIG4), found in Coprinopsis cinerea (strain Okayama-7 / 130 / ATCC MYA-4618 / FGSC 9003) (Inky cap fungus).